The primary structure comprises 91 residues: uncharacterized protein (91 aa).

The protein belongs to the UPF0440 family.

This is an uncharacterized protein from Methanothermobacter thermautotrophicus (strain ATCC 29096 / DSM 1053 / JCM 10044 / NBRC 100330 / Delta H) (Methanobacterium thermoautotrophicum).